The primary structure comprises 266 residues: 5'-nucleotidase SurE (266 aa).

The a divalent metal cation site is built by aspartate 8, aspartate 9, serine 42, and asparagine 98.

It belongs to the SurE nucleotidase family. The cofactor is a divalent metal cation.

The protein resides in the cytoplasm. The catalysed reaction is a ribonucleoside 5'-phosphate + H2O = a ribonucleoside + phosphate. Its function is as follows. Nucleotidase that shows phosphatase activity on nucleoside 5'-monophosphates. This Methanocaldococcus jannaschii (strain ATCC 43067 / DSM 2661 / JAL-1 / JCM 10045 / NBRC 100440) (Methanococcus jannaschii) protein is 5'-nucleotidase SurE.